Reading from the N-terminus, the 224-residue chain is DeSI-like protein At4g17486 (224 aa).

Positions 26-163 (TPVYLNVYDL…FCNCLLPESI (138 aa)) constitute a PPPDE domain. Active-site residues include His-51 and Cys-125. The tract at residues 176-201 (EFSDEDESNSEASSVSDEEGSEQHLI) is disordered.

It belongs to the DeSI family.

This Arabidopsis thaliana (Mouse-ear cress) protein is DeSI-like protein At4g17486.